The primary structure comprises 250 residues: Ubiquinone/menaquinone biosynthesis C-methyltransferase UbiE (250 aa).

S-adenosyl-L-methionine-binding positions include Thr73, Asp94, 122 to 123 (NA), and Ser139.

It belongs to the class I-like SAM-binding methyltransferase superfamily. MenG/UbiE family.

It carries out the reaction a 2-demethylmenaquinol + S-adenosyl-L-methionine = a menaquinol + S-adenosyl-L-homocysteine + H(+). It catalyses the reaction a 2-methoxy-6-(all-trans-polyprenyl)benzene-1,4-diol + S-adenosyl-L-methionine = a 5-methoxy-2-methyl-3-(all-trans-polyprenyl)benzene-1,4-diol + S-adenosyl-L-homocysteine + H(+). The protein operates within quinol/quinone metabolism; menaquinone biosynthesis; menaquinol from 1,4-dihydroxy-2-naphthoate: step 2/2. It participates in cofactor biosynthesis; ubiquinone biosynthesis. Methyltransferase required for the conversion of demethylmenaquinol (DMKH2) to menaquinol (MKH2) and the conversion of 2-polyprenyl-6-methoxy-1,4-benzoquinol (DDMQH2) to 2-polyprenyl-3-methyl-6-methoxy-1,4-benzoquinol (DMQH2). The sequence is that of Ubiquinone/menaquinone biosynthesis C-methyltransferase UbiE from Francisella philomiragia subsp. philomiragia (strain ATCC 25017 / CCUG 19701 / FSC 153 / O#319-036).